Here is a 126-residue protein sequence, read N- to C-terminus: Probable glycine cleavage system H protein (126 aa).

The Lipoyl-binding domain maps to 24–106 (VVRVGITDFA…FGDGWLLEVE (83 aa)). K65 is modified (N6-lipoyllysine).

This sequence belongs to the GcvH family. The glycine cleavage system is composed of four proteins: P, T, L and H. The cofactor is (R)-lipoate.

The glycine cleavage system catalyzes the degradation of glycine. The H protein shuttles the methylamine group of glycine from the P protein to the T protein. In Natronomonas pharaonis (strain ATCC 35678 / DSM 2160 / CIP 103997 / JCM 8858 / NBRC 14720 / NCIMB 2260 / Gabara) (Halobacterium pharaonis), this protein is Probable glycine cleavage system H protein.